A 426-amino-acid polypeptide reads, in one-letter code: Enolase (426 aa).

Position 163 (Gln-163) interacts with (2R)-2-phosphoglycerate. The active-site Proton donor is the Glu-205. 3 residues coordinate Mg(2+): Asp-242, Glu-286, and Asp-313. (2R)-2-phosphoglycerate-binding residues include Lys-338, Arg-367, Ser-368, and Lys-389. Lys-338 acts as the Proton acceptor in catalysis.

It belongs to the enolase family. Mg(2+) serves as cofactor.

The protein localises to the cytoplasm. The protein resides in the secreted. Its subcellular location is the cell surface. The catalysed reaction is (2R)-2-phosphoglycerate = phosphoenolpyruvate + H2O. It participates in carbohydrate degradation; glycolysis; pyruvate from D-glyceraldehyde 3-phosphate: step 4/5. In terms of biological role, catalyzes the reversible conversion of 2-phosphoglycerate (2-PG) into phosphoenolpyruvate (PEP). It is essential for the degradation of carbohydrates via glycolysis. The polypeptide is Enolase (Helicobacter pylori (strain G27)).